The primary structure comprises 1199 residues: Putative mitoferrin (1199 aa).

A helical membrane pass occupies residues Val32 to Met52. 13 N-linked (GlcNAc...) asparagine glycosylation sites follow: Asn92, Asn171, Asn208, Asn268, Asn326, Asn353, Asn443, Asn499, Asn539, Asn649, Asn708, Asn715, and Asn723. Residues Gly730–Glu750 traverse the membrane as a helical segment. Residues Asn763 and Asn772 are each glycosylated (N-linked (GlcNAc...) asparagine). One copy of the Solcar 1 repeat lies at Leu792 to Ile873. Transmembrane regions (helical) follow at residues Phe795–Ile815 and Leu845–Cys865. 7 N-linked (GlcNAc...) asparagine glycosylation sites follow: Asn914, Asn922, Asn965, Asn1013, Asn1022, Asn1041, and Asn1056. The Solcar 2 repeat unit spans residues Ser1109–Phe1191. A helical transmembrane segment spans residues Phe1111–Ile1131.

It belongs to the mitochondrial carrier (TC 2.A.29) family.

The protein localises to the mitochondrion membrane. Its function is as follows. Putative iron transporter. The polypeptide is Putative mitoferrin (Plasmodium falciparum (isolate 3D7)).